We begin with the raw amino-acid sequence, 317 residues long: Thymidylate synthase (317 aa).

Residues R40 and 167–168 (RR) each bind dUMP. The active-site Nucleophile is the C187. DUMP contacts are provided by residues 216–219 (RSCD), N227, and 257–259 (HVY). (6R)-5,10-methylene-5,6,7,8-tetrahydrofolate is bound at residue D219.

Belongs to the thymidylate synthase family. In terms of assembly, homodimer.

It carries out the reaction dUMP + (6R)-5,10-methylene-5,6,7,8-tetrahydrofolate = 7,8-dihydrofolate + dTMP. The protein operates within pyrimidine metabolism; dTTP biosynthesis. The sequence is that of Thymidylate synthase (TMP1) from Cryptococcus neoformans var. neoformans serotype D (strain B-3501A) (Filobasidiella neoformans).